The sequence spans 806 residues: Plasminogen (806 aa).

The first 19 residues, 1–19 (MEYGKVIFLFLLFLKSGQG), serve as a signal peptide directing secretion. In terms of domain architecture, PAN spans 20–98 (ESLENYIKTE…RDVVLFEKRI (79 aa)). 21 disulfide bridges follow: Cys-49–Cys-73, Cys-53–Cys-61, Cys-103–Cys-181, Cys-124–Cys-164, Cys-152–Cys-176, Cys-185–Cys-262, Cys-188–Cys-316, Cys-206–Cys-245, Cys-234–Cys-257, Cys-275–Cys-352, Cys-296–Cys-335, Cys-324–Cys-347, Cys-371–Cys-448, Cys-392–Cys-431, Cys-420–Cys-443, Cys-476–Cys-555, Cys-497–Cys-538, Cys-526–Cys-550, Cys-563–Cys-681, Cys-573–Cys-581, and Cys-603–Cys-619. Kringle domains are found at residues 102-181 (DCKS…VPEC), 184-262 (ECMH…IPRC), 274-352 (QCLK…IPSC), 370-448 (ECYE…LEKC), and 475-555 (DCMY…IPQC). Residues 577-804 (IVGGCYAQPH…YISWIEDVMK (228 aa)) form the Peptidase S1 domain. Ser-593 is subject to Phosphoserine. Active-site charge relay system residues include His-618 and Asp-661. The residue at position 684 (Ser-684) is a Phosphoserine. Cystine bridges form between Cys-695/Cys-762, Cys-725/Cys-741, and Cys-752/Cys-780. Ser-756 serves as the catalytic Charge relay system.

It belongs to the peptidase S1 family. Plasminogen subfamily. Interacts with CSPG4 and AMOT. Interacts (via the Kringle domains) with HRG; the interaction tethers PLG to the cell surface and enhances its activation. Interacts (via Kringle 4 domain) with ADA; the interaction stimulates PLG activation when in complex with DPP4. Angiostatin: Interacts with ATP5F1A; the interaction inhibits most of the angiogenic effects of angiostatin. In terms of processing, in the presence of the inhibitor, the activation involves only cleavage after Arg-576, yielding two chains held together by two disulfide bonds. In the absence of the inhibitor, the activation involves additionally the removal of the activation peptide.

It localises to the secreted. It carries out the reaction Preferential cleavage: Lys-|-Xaa &gt; Arg-|-Xaa, higher selectivity than trypsin. Converts fibrin into soluble products.. Its activity is regulated as follows. Converted into plasmin by plasminogen activators, both plasminogen and its activator being bound to fibrin. Activated with catalytic amounts of streptokinase. In terms of biological role, plasmin dissolves the fibrin of blood clots and acts as a proteolytic factor in a variety of other processes including embryonic development, tissue remodeling, tumor invasion, and inflammation. In ovulation, weakens the walls of the Graafian follicle. It activates the urokinase-type plasminogen activator, collagenases and several complement zymogens, such as C1, C4 and C5. Cleavage of fibronectin and laminin leads to cell detachment and apoptosis. Also cleaves fibrin, thrombospondin and von Willebrand factor. Its role in tissue remodeling and tumor invasion may be modulated by CSPG4. Binds to cells. The sequence is that of Plasminogen (PLG) from Notamacropus eugenii (Tammar wallaby).